The following is a 233-amino-acid chain: Large ribosomal subunit protein uL1 (233 aa).

Belongs to the universal ribosomal protein uL1 family. As to quaternary structure, part of the 50S ribosomal subunit.

Functionally, binds directly to 23S rRNA. The L1 stalk is quite mobile in the ribosome, and is involved in E site tRNA release. In terms of biological role, protein L1 is also a translational repressor protein, it controls the translation of the L11 operon by binding to its mRNA. The protein is Large ribosomal subunit protein uL1 of Vibrio parahaemolyticus serotype O3:K6 (strain RIMD 2210633).